The chain runs to 389 residues: uncharacterized protein (389 aa).

Residues 1-12 (MVHATSQSASTE) are compositionally biased toward polar residues. 2 disordered regions span residues 1–49 (MVHA…DEDL) and 86–111 (HKSM…ANRA). The segment covering 40 to 49 (ESGDEYDEDL) has biased composition (acidic residues). A compositionally biased stretch (basic residues) spans 93 to 110 (RGKKKRGKTAKKAKKANR).

This is an uncharacterized protein from Caenorhabditis elegans.